A 424-amino-acid chain; its full sequence is Galacturonokinase (424 aa).

Ser2 bears the N-acetylserine mark. 146 to 155 (DSSGLSSSAA) contributes to the ATP binding site. The active-site Proton acceptor is the Asp197.

The protein belongs to the GHMP kinase family. The cofactor is Mg(2+). It depends on Mn(2+) as a cofactor. Ca(2+) is required as a cofactor. Expressed in roots, stems, leaves, flowers and young siliques. Higher expression in the elongating middle stem region than in the lower or upper stem region.

It carries out the reaction D-galacturonate + ATP = 1-phospho-alpha-D-galacturonate + ADP + H(+). With respect to regulation, inhibited by EDTA and ADP. Functionally, sugar-1-kinase with a strict substrate specificity for the alpha-anomeric configuration of D-galacturonic acid (D-GalA) and ATP. Involved in the biosynthesis of UDP-galacturonic acid (UDP-GalA) from the salvaged GalA that is released during growth-dependent cell wall restructuring. This Arabidopsis thaliana (Mouse-ear cress) protein is Galacturonokinase (GALAK).